The sequence spans 183 residues: MEVQELFLLALAISLDAFGVILCIGINKGITLKSSMIFVFSFGFFQFFLSFLGGYIGTIFNKYIVPIPTIVGGLIIIIVGILMITEGFKEKEESIFLNKIMYLILGVSVSIDALVIGFTTLSYINNLFYLFMSSLFMGLIATIICSLGIILSKYIKKISIISSYADYIGGIILILFGLKMLFF.

6 helical membrane-spanning segments follow: residues 6–26, 36–56, 64–84, 100–120, 130–150, and 158–178; these read LFLL…CIGI, MIFV…GGYI, IVPI…ILMI, IMYL…GFTT, LFMS…LGII, and ISII…LFGL.

This sequence belongs to the MntP (TC 9.B.29) family.

Its subcellular location is the cell membrane. Its function is as follows. Probably functions as a manganese efflux pump. This chain is Putative manganese efflux pump MntP 1, found in Clostridium botulinum (strain Hall / ATCC 3502 / NCTC 13319 / Type A).